The sequence spans 1222 residues: Kinesin-related protein 9 (1222 aa).

A compositionally biased stretch (polar residues) spans 1–25; it reads MDNNNNNFSTPKQPTINSTTGGQLR. 3 disordered regions span residues 1 to 55, 75 to 165, and 188 to 343; these read MDNN…ITNS, MDSL…STNI, and SSNT…TQPL. The segment covering 26 to 55 has biased composition (low complexity); sequence SRSNSSPSTSSISTPRNGSTTATTSSITNS. A compositionally biased stretch (polar residues) spans 75-85; that stretch reads MDSLSTPMSQS. 4 stretches are compositionally biased toward low complexity: residues 122–165, 194–209, 216–238, and 254–325; these read SFIS…STNI, SSLP…PLSN, NHHL…ISTT, and NLTT…RTPI. The segment covering 326–343 has biased composition (polar residues); it reads QNFNSVGGVNITSKTQPL. The region spanning 350–719 is the Kinesin motor domain; it reads SIQAVCRFRP…LNFGQRAQSV (370 aa). Residue 438–445 participates in ATP binding; it reads GQTGAGKT. A coiled-coil region spans residues 724–1026; that stretch reads LQNVEESHSE…DTLTNKLEIQ (303 aa). The segment at 1144 to 1174 is disordered; that stretch reads NINNNNNIKNNNNNNKLKSKKVGSSSSSSSN. The helical transmembrane segment at 1183 to 1203 threads the bilayer; the sequence is ILFFLIILVILFFLMVAVGLT.

It belongs to the TRAFAC class myosin-kinesin ATPase superfamily. Kinesin family.

The protein localises to the membrane. The protein resides in the cytoplasm. It is found in the cytoskeleton. Functionally, microtubule-associated force-producing protein that plays a role in organelle transport. Its motor activity is directed toward the microtubule's plus end. This Dictyostelium discoideum (Social amoeba) protein is Kinesin-related protein 9 (kif9).